We begin with the raw amino-acid sequence, 278 residues long: HTH-type transcriptional activator RhaS (278 aa).

Residues 174-272 enclose the HTH araC/xylS-type domain; that stretch reads NQLMAWLEDH…NWSPRDIRQG (99 aa). 2 consecutive DNA-binding regions (H-T-H motif) follow at residues 191–212 and 239–262; these read EAVAEQFSLSLRTLHRQLKQHT and VTEIAYRCGFGDSNHFSTLFRREF.

As to quaternary structure, binds DNA as a dimer.

The protein resides in the cytoplasm. Its function is as follows. Activates expression of the rhaBAD and rhaT operons. This Salmonella paratyphi A (strain ATCC 9150 / SARB42) protein is HTH-type transcriptional activator RhaS.